Reading from the N-terminus, the 611-residue chain is E-selectin (611 aa).

An N-terminal signal peptide occupies residues 1-22 (MITSQLLPALTLVLLLFKEGGA). The region spanning 23–140 (WSYNASTEAM…CDKKKLALCY (118 aa)) is the C-type lectin domain. Topologically, residues 23–557 (WSYNASTEAM…CEAPTESSIP (535 aa)) are extracellular. A glycan (N-linked (GlcNAc...) asparagine) is linked at asparagine 26. Cystine bridges form between cysteine 41-cysteine 139, cysteine 112-cysteine 131, cysteine 144-cysteine 155, cysteine 149-cysteine 164, cysteine 166-cysteine 175, cysteine 181-cysteine 225, cysteine 194-cysteine 207, cysteine 211-cysteine 238, cysteine 243-cysteine 287, cysteine 256-cysteine 269, cysteine 273-cysteine 300, cysteine 305-cysteine 350, cysteine 336-cysteine 363, cysteine 368-cysteine 413, cysteine 399-cysteine 426, cysteine 431-cysteine 476, cysteine 462-cysteine 489, cysteine 494-cysteine 535, and cysteine 521-cysteine 548. Ca(2+) contacts are provided by glutamate 102, asparagine 104, and glutamate 110. A carbohydrate is bound by residues 102–110 (EPNNKQNDE), 114–119 (EIYIKR), and 127–129 (NDE). Residues asparagine 127 and aspartate 128 each coordinate Ca(2+). Positions 141–176 (TAACTPTSCSGHGECVETVNNYTCKCHPGFRGLRCE) constitute an EGF-like domain. Asparagine 161 carries an N-linked (GlcNAc...) asparagine glycan. 2 Sushi domains span residues 179–240 (VTCQ…ACNV) and 241–302 (VECS…TCKA). Asparagine 204 carries an N-linked (GlcNAc...) asparagine glycan. Asparagine 266 carries an N-linked (GlcNAc...) asparagine glycan. N-linked (GlcNAc...) asparagine glycans are attached at residues asparagine 313 and asparagine 333. Sushi domains follow at residues 316–365 (VSCS…VCKA), 367–428 (QCKA…TCEA), 430–491 (KCDA…SCQV), and 492–550 (VQCF…TCEA). Asparagine 528 carries N-linked (GlcNAc...) asparagine glycosylation. A helical transmembrane segment spans residues 558 to 579 (LAVGLTAGGTSLLTVASFLLWL). At 580 to 611 (LKRLRKRAKKFVPASSCQSLQSDGSYHMPCSI) the chain is on the cytoplasmic side.

It belongs to the selectin/LECAM family. In terms of assembly, interacts with SELPLG/PSGL1 and PODXL2 through the sialyl Lewis X epitope. SELPLG sulfation appears not to be required for this interaction.

The protein resides in the cell membrane. In terms of biological role, cell-surface glycoprotein having a role in immunoadhesion. Mediates in the adhesion of blood neutrophils in cytokine-activated endothelium through interaction with SELPLG/PSGL1. May have a role in capillary morphogenesis. This Canis lupus familiaris (Dog) protein is E-selectin (SELE).